The following is a 222-amino-acid chain: Peroxisomal membrane protein 11-4 (222 aa).

Residues 1-81 lie on the Cytoplasmic side of the membrane; it reads MSAGDTLDKL…LNGLRRAPGE (81 aa). Residues 82–102 traverse the membrane as a helical segment; it reads FGALAVLANAGEMVYFFFDHF. Residues 103–196 lie on the Lumenal side of the membrane; sequence TWLSRVGVLD…IGIADIEPNP (94 aa). A helical membrane pass occupies residues 197 to 217; that stretch reads FCNHAVTLGISGLVSAWAGWY. Residues 218–222 are Cytoplasmic-facing; that stretch reads RNWPS.

It belongs to the peroxin-11 family. As to expression, expressed in seedlings, shoots, leaf sheaths and flag leaf.

The protein resides in the peroxisome membrane. In terms of biological role, involved in peroxisomal proliferation. This chain is Peroxisomal membrane protein 11-4 (PEX11-4), found in Oryza sativa subsp. indica (Rice).